The following is a 628-amino-acid chain: Cytoplasmic dynein 1 intermediate chain 1 (628 aa).

Composition is skewed to basic and acidic residues over residues 1 to 13 (MSDKSDLKAELER) and 20 to 60 (QIRE…RETE). Positions 1-114 (MSDKSDLKAE…RTLQWDTDPS (114 aa)) are disordered. Ser2 is modified (N-acetylserine). Ser50 carries the phosphoserine modification. Residues 70–79 (PEPPLVPTPM) show a composition bias toward pro residues. Low complexity predominate over residues 80 to 90 (SPSSKSVSTPS). Ser83 carries the phosphoserine modification. Residue Thr88 is modified to Phosphothreonine. 3 positions are modified to phosphoserine: Ser90, Ser94, and Ser97. Over residues 105 to 114 (RTLQWDTDPS) the composition is skewed to polar residues. The interaction with DYNLT1 stretch occupies residues 130–146 (KLGVSKVTQVDFLPREV). The tract at residues 152 to 204 (ETQTPLATHQSEEDEEDEEMVEPKIGHDSELENQEKKQETKEAPPRELTEEEK) is disordered. Phosphothreonine is present on Thr159. A phosphoserine mark is found at Ser162 and Ser180. Residues 172 to 204 (VEPKIGHDSELENQEKKQETKEAPPRELTEEEK) are compositionally biased toward basic and acidic residues. 7 WD repeats span residues 268–317 (SKHR…TTPE), 321–361 (HCQS…RTPV), 370–411 (AHTH…TPQE), 420–460 (SKPV…AGIG), 465–510 (GHQG…PLYS), 513–553 (DNAD…EVPT), and 559–598 (EGASALNRVRWAQGGKEVAVGDSEGRIWIYDVGELAVPHN). Residue Ser618 is modified to Phosphoserine.

This sequence belongs to the dynein intermediate chain family. As to quaternary structure, homodimer. The cytoplasmic dynein 1 complex consists of two catalytic heavy chains (HCs) and a number of non-catalytic subunits presented by intermediate chains (ICs), light intermediate chains (LICs) and light chains (LCs); the composition seems to vary in respect to the IC, LIC and LC composition. The heavy chain homodimer serves as a scaffold for the probable homodimeric assembly of the respective non-catalytic subunits. The ICs and LICs bind directly to the HC dimer and the LCs assemble on the IC dimer. Interacts with DYNC1H1. Interacts with DYNLT1 and DYNLT3. Interacts with DCTN1. Interacts with DYNLL2. Interacts with MCRS1; the interaction is required for the proper distribution of centriolar satellites.

It is found in the cytoplasm. The protein localises to the chromosome. The protein resides in the centromere. Its subcellular location is the kinetochore. It localises to the cytoskeleton. It is found in the spindle pole. Its function is as follows. Acts as one of several non-catalytic accessory components of the cytoplasmic dynein 1 complex that are thought to be involved in linking dynein to cargos and to adapter proteins that regulate dynein function. Cytoplasmic dynein 1 acts as a motor for the intracellular retrograde motility of vesicles and organelles along microtubules. The intermediate chains mediate the binding of dynein to dynactin via its 150 kDa component (p150-glued) DCTN1. May play a role in mediating the interaction of cytoplasmic dynein with membranous organelles and kinetochores. This is Cytoplasmic dynein 1 intermediate chain 1 (Dync1i1) from Mus musculus (Mouse).